Reading from the N-terminus, the 114-residue chain is Large ribosomal subunit protein uL18 (114 aa).

Belongs to the universal ribosomal protein uL18 family. In terms of assembly, part of the 50S ribosomal subunit; part of the 5S rRNA/L5/L18/L25 subcomplex. Contacts the 5S and 23S rRNAs.

Functionally, this is one of the proteins that bind and probably mediate the attachment of the 5S RNA into the large ribosomal subunit, where it forms part of the central protuberance. The sequence is that of Large ribosomal subunit protein uL18 from Aster yellows phytoplasma.